A 929-amino-acid chain; its full sequence is Isoleucine--tRNA ligase (929 aa).

Residues 58 to 68 carry the 'HIGH' region motif; sequence PYANGDIHIGH. E563 contributes to the L-isoleucyl-5'-AMP binding site. The 'KMSKS' region motif lies at 605 to 609; the sequence is KMSKS. Residue K608 coordinates ATP. 4 residues coordinate Zn(2+): C892, C895, C912, and C915.

The protein belongs to the class-I aminoacyl-tRNA synthetase family. IleS type 1 subfamily. As to quaternary structure, monomer. It depends on Zn(2+) as a cofactor.

Its subcellular location is the cytoplasm. The enzyme catalyses tRNA(Ile) + L-isoleucine + ATP = L-isoleucyl-tRNA(Ile) + AMP + diphosphate. Its function is as follows. Catalyzes the attachment of isoleucine to tRNA(Ile). As IleRS can inadvertently accommodate and process structurally similar amino acids such as valine, to avoid such errors it has two additional distinct tRNA(Ile)-dependent editing activities. One activity is designated as 'pretransfer' editing and involves the hydrolysis of activated Val-AMP. The other activity is designated 'posttransfer' editing and involves deacylation of mischarged Val-tRNA(Ile). This chain is Isoleucine--tRNA ligase, found in Neisseria gonorrhoeae (strain ATCC 700825 / FA 1090).